The sequence spans 66 residues: Heat-stable enterotoxin (66 aa).

A signal peptide spans 1–19; that stretch reads MKKIVFVLVLMLSSFGTFG. Positions 20 to 50 are excised as a propeptide; it reads QETASRQFGDAFSTPIAAEVNKKACDTELPP. Cystine bridges form between cysteine 54-cysteine 59, cysteine 55-cysteine 63, and cysteine 58-cysteine 66.

Belongs to the heat-stable enterotoxin family.

It localises to the secreted. Functionally, toxin which activates the particulate form of guanylate cyclase and increases cyclic GMP levels within the host intestinal epithelial cells. The chain is Heat-stable enterotoxin (yst) from Yersinia kristensenii.